Here is a 118-residue protein sequence, read N- to C-terminus: BET1 homolog (118 aa).

Over 1–94 the chain is Cytoplasmic; sequence MRRAGLGEGV…LKILSRGSQT (94 aa). In terms of domain architecture, t-SNARE coiled-coil homology spans 26-88; the sequence is SACEEENERL…GKTMGKLKIL (63 aa). S50 is subject to Phosphoserine. A helical; Anchor for type IV membrane protein membrane pass occupies residues 95 to 115; that stretch reads KLLCYMMLFSLFVFFIIYWII. Residues 116-118 are Vesicular-facing; that stretch reads KLR.

It belongs to the BET1 family. Interacts with SNARE complex members GOSR2, SEC22B and STX5. Interacts with LMAN1/ERGIC53. Interacts with STX17. Expressed in muscle.

The protein localises to the endoplasmic reticulum membrane. It is found in the golgi apparatus. The protein resides in the cis-Golgi network membrane. It localises to the golgi apparatus membrane. Its function is as follows. Required for vesicular transport from the ER to the Golgi complex. Functions as a SNARE involved in the docking process of ER-derived vesicles with the cis-Golgi membrane. The chain is BET1 homolog (BET1) from Homo sapiens (Human).